We begin with the raw amino-acid sequence, 541 residues long: NADH-ubiquinone oxidoreductase chain 5 (541 aa).

The next 16 membrane-spanning stretches (helical) occupy residues 17 to 37 (LLIF…LFAF), 48 to 70 (TIIH…YYMM), 74 to 94 (FVNR…LLIM), 98 to 118 (GLSL…LIMF), 130 to 150 (ITIL…GLMF), 157 to 177 (YMFL…SSFT), 191 to 213 (AMAA…AGIY), 226 to 246 (GCFL…LAAF), 263 to 283 (LGVM…FHLF), 285 to 305 (HALF…SLGV), 322 to 342 (SYII…SGFF), 353 to 373 (SLCM…TSTY), 404 to 424 (LFVL…MFSG), 429 to 449 (IILG…GVIL), 455 to 475 (SFSL…FITG), and 518 to 538 (FLTS…TLFM).

Belongs to the complex I subunit 5 family.

Its subcellular location is the mitochondrion inner membrane. The enzyme catalyses a ubiquinone + NADH + 5 H(+)(in) = a ubiquinol + NAD(+) + 4 H(+)(out). Core subunit of the mitochondrial membrane respiratory chain NADH dehydrogenase (Complex I) that is believed to belong to the minimal assembly required for catalysis. Complex I functions in the transfer of electrons from NADH to the respiratory chain. The immediate electron acceptor for the enzyme is believed to be ubiquinone. In Artemia franciscana (Brine shrimp), this protein is NADH-ubiquinone oxidoreductase chain 5 (ND5).